A 591-amino-acid chain; its full sequence is L-fucose isomerase (591 aa).

Residues Glu-337 and Asp-361 each act as proton acceptor in the active site. Residues Glu-337, Asp-361, and His-528 each coordinate Mn(2+).

The protein belongs to the L-fucose isomerase family. As to quaternary structure, homohexamer. Mn(2+) is required as a cofactor.

It is found in the cytoplasm. It carries out the reaction L-fucose = L-fuculose. It functions in the pathway carbohydrate degradation; L-fucose degradation; L-lactaldehyde and glycerone phosphate from L-fucose: step 1/3. Its function is as follows. Converts the aldose L-fucose into the corresponding ketose L-fuculose. The protein is L-fucose isomerase of Shigella dysenteriae serotype 1 (strain Sd197).